We begin with the raw amino-acid sequence, 1087 residues long: Voltage-gated inwardly rectifying potassium channel KCNH3 (1087 aa).

Residues 1–228 are Cytoplasmic-facing; sequence MPAMRGLLAP…HCGALRATWD (228 aa). One can recognise a PAS domain in the interval 18–90; it reads IATRFDGTHS…QQIRKALDEH (73 aa). In terms of domain architecture, PAC spans 93-145; the sequence is FKAELILYRKSGLPFWCLLDVIPIKNEKGEVALFLVSHKDISETKNRGGPDNW. Residues 137 to 150 show a composition bias toward basic and acidic residues; it reads KNRGGPDNWKERGG. A disordered region spans residues 137–161; the sequence is KNRGGPDNWKERGGGRRRYGRAGSK. A helical membrane pass occupies residues 229–249; it reads GFILLATLYVAVTVPYSVCVS. At 250–259 the chain is on the extracellular side; it reads TAREPSAARG. The helical transmembrane segment at 260-280 threads the bilayer; it reads PPSVCDLAVEVLFILDIVLNF. Topologically, residues 281-302 are cytoplasmic; the sequence is RTTFVSKSGQVVFAPKSICLHY. Residues 303 to 323 form a helical membrane-spanning segment; sequence VTTWFLLDVIAALPFDLLHAF. The Extracellular portion of the chain corresponds to 324 to 331; that stretch reads KVNVYVGA. The chain crosses the membrane as a helical; Voltage-sensor span at residues 332–352; the sequence is HLLKTVRLLRLLRLLPRLDRY. Over 353-361 the chain is Cytoplasmic; it reads SQYSAVVLT. The chain crosses the membrane as a helical span at residues 362 to 382; sequence LLMAVFALLAHWVACVWFYIG. The Extracellular segment spans residues 383–456; the sequence is QQEIENSESE…GGPSLRSAYI (74 aa). Residues 416–436 are disordered; the sequence is SPDGGNSSGQSENCSSSGGGS. Low complexity predominate over residues 419–431; it reads GGNSSGQSENCSS. N-linked (GlcNAc...) asparagine glycosylation is found at Asn-421, Asn-428, and Asn-439. The pore-forming intramembrane region spans 457–477; it reads TSLYFALSSLTSVGFGNVSAN. Positions 468–473 match the Selectivity filter motif; that stretch reads SVGFGN. Over 478–482 the chain is Extracellular; it reads TDTEK. Residues 483-503 form a helical membrane-spanning segment; the sequence is IFSICTMLIGALMHAVVFGNV. Residues 504–1087 are Cytoplasmic-facing; sequence TAIIQRMYAR…QWTQEEGTGV (584 aa). 585–700 provides a ligand contact to a nucleoside 3',5'-cyclic phosphate; the sequence is LFEAASRGCL…FAPRFSRGLR (116 aa). 2 disordered regions span residues 733 to 813 and 975 to 1061; these read EKET…LQLP and LMAP…PWDP. Residues 776-788 are compositionally biased toward basic residues; it reads TAPRPRLGGRGRP.

This sequence belongs to the potassium channel family. H (Eag) (TC 1.A.1.20) subfamily. Kv12.2/KCNH3 sub-subfamily. The potassium channel is probably composed of a homo- or heterotetrameric complex of pore-forming alpha subunits that can associate with modulating beta subunits. Interacts with KCNE1 and KCNE3; these interactions regulate KCNH3 trafficking to the plasma membrane and its subsequent voltage-gated potassium channel activity. Post-translationally, N-glycosylated. N-glycosylation mediates traffick to the cell membrane but is not necessary for voltage-gated potassium channel activity. In terms of tissue distribution, highly expressed in adult and embryonic brain, in particular in cerebellum, brain stem, hippocampus, cortex and striatum. Also found in pituitary.

It localises to the cell membrane. It catalyses the reaction K(+)(in) = K(+)(out). In terms of biological role, pore-forming (alpha) subunit of a voltage-gated inwardly rectifying potassium channel. Charactherized by a fast rate of activation during depolarization followed by a rapid inactivation at much more depolarized value causing inward rectification due to a C-type inactivation mechanism. Exhibits a rapid recovery from inactivation. The protein is Voltage-gated inwardly rectifying potassium channel KCNH3 of Rattus norvegicus (Rat).